A 101-amino-acid chain; its full sequence is Protein snet-1 (101 aa).

A signal peptide spans 1-20; sequence MARFTPLLMILLALVPLYYS.

May be degraded by the nep-2 peptidase. In terms of tissue distribution, expressed in coelomocytes, the ASK sensory neurons and interneurons AIB, AIM and PVQ.

It localises to the secreted. The protein resides in the perikaryon. In terms of biological role, negatively regulates chemotaxis and olfactory plasticity which is the change from positive chemotaxis to dispersal after prolonged exposure to an odorant. May be down-regulated in response to pheromone exposure, resulting in promotion of olfactory plasticity. This is Protein snet-1 from Caenorhabditis elegans.